Here is a 719-residue protein sequence, read N- to C-terminus: Pesticidal crystal protein Cry1Ib (719 aa).

This sequence belongs to the delta endotoxin family.

Its function is as follows. Promotes colloidosmotic lysis by binding to the midgut epithelial cells of certain coleopteran and lepidopteran species. Active on Plutella xylostella but not on Bombyx mori. In Bacillus thuringiensis subsp. entomocidus, this protein is Pesticidal crystal protein Cry1Ib (cry1Ib).